The sequence spans 316 residues: Retinol dehydrogenase 12 (316 aa).

Residue Gly46–Gly52 coordinates NADP(+). Ser175 is a substrate binding site. Residue Tyr200 is the Proton acceptor of the active site.

This sequence belongs to the short-chain dehydrogenases/reductases (SDR) family. Widely expressed, mostly in retina, kidney, brain, skeletal muscle, pancreas and stomach.

The protein localises to the endoplasmic reticulum membrane. The enzyme catalyses all-trans-retinol + NADP(+) = all-trans-retinal + NADPH + H(+). It carries out the reaction 11-cis-retinol + NADP(+) = 11-cis-retinal + NADPH + H(+). It catalyses the reaction 9-cis-retinol + NADP(+) = 9-cis-retinal + NADPH + H(+). The catalysed reaction is a 4-hydroxynonen-1-ol + NADP(+) = a 4-hydroxynonenal + NADPH + H(+). The enzyme catalyses (E)-non-2-en-1-ol + NADP(+) = (E)-non-2-enal + NADPH + H(+). It carries out the reaction (Z)-non-6-en-1-ol + NADP(+) = (Z)-non-6-enal + NADPH + H(+). It catalyses the reaction nonan-1-ol + NADP(+) = nonanal + NADPH + H(+). It participates in cofactor metabolism; retinol metabolism. In terms of biological role, retinoids dehydrogenase/reductase with a clear preference for NADP. Displays high activity towards 9-cis, 11-cis and all-trans-retinal. Shows very weak activity towards 13-cis-retinol. Also exhibits activity, albeit with lower affinity than for retinaldehydes, towards lipid peroxidation products (C9 aldehydes) such as 4-hydroxynonenal and trans-2-nonenal. May play an important function in photoreceptor cells to detoxify 4-hydroxynonenal and potentially other toxic aldehyde products resulting from lipid peroxidation. Has no dehydrogenase activity towards steroids. The protein is Retinol dehydrogenase 12 (RDH12) of Homo sapiens (Human).